A 275-amino-acid chain; its full sequence is Orotidine 5'-phosphate decarboxylase (275 aa).

K95 functions as the Proton donor in the catalytic mechanism.

The protein belongs to the OMP decarboxylase family. Type 2 subfamily.

The enzyme catalyses orotidine 5'-phosphate + H(+) = UMP + CO2. It participates in pyrimidine metabolism; UMP biosynthesis via de novo pathway; UMP from orotate: step 2/2. The sequence is that of Orotidine 5'-phosphate decarboxylase from Delftia acidovorans (strain DSM 14801 / SPH-1).